The primary structure comprises 1017 residues: MVAKGRIIRVTGPLVVADGMKGAKMYEVVRVGELGLIGEIIRLEGDKAVIQVYEETAGVRPGEPVIGTGSSLSVELGPGLLTSIYDGIQRPLEVIREKTGDFIARGVTAPALPRDKKWHFIPKVKVGDKVVGGDIIGEVPETSIITHKIMVPPGIEGEIVEIAEEGEYTIEEVIAKVKTPSGEIKELKMYQRWPVRVKRPYKEKLPPEVPLITGQRVIDTFFPQAKGGTAAIPGPFGSGKCVDGDTLVLTKEFGLIKIKDLYKILDGKGKKTVNGNEEWTELERPITLYGYKDGKIVEIKATHVYKGFSAGMIEIRTRTGRKIKVTPIHKLFTGRVTKNGLEIREVMAKDLKKGDRIIVAKKIDGGERVKLNIRVEQKRGKKIRIPDVLDEKLAEFLGYLIADGTLKPRTVAIYNNDESLLRRANELANELFNIEGKIVKGRTVKALLIHSKALVEFFSKLGVPRNKKARTWKVPKELLISEPEVVKAFIKAYIMCDGYYDENKGEIEIVTASEEAAYGFSYLLAKLGIYAIIREKIIGDKVYYRVVISGESNLEKLGIERVGRGYTSYDIVPVEVEELYNALGRPYAELKRAGIEIHNYLSGENMSYEMFRKFAKFVGMEEIAENHLTHVLFDEIVEIRYISEGQEVYDVTTETHNFIGGNMPTLLHNTVTQHQLAKWSDAQVVIYIGCGERGNEMTDVLEEFPKLKDPKTGKPLMERTVLIANTSNMPVAAREASIYTGITIAEYFRDMGYDVALMADSTSRWAEALREISGRLEEMPGEEGYPAYLASKLAEFYERAGRVVTLGSDYRVGSVSVIGAVSPPGGDFSEPVVQNTLRVVKVFWALDADLARRRHFPAINWLTSYSLYVDAVKDWWHKNVDPEWKAMRDKAMELLQKESELQEIVRIVGPDALPERERAILLVARMLREDYLQQDAFDEVDTYCPPEKQVTMMRVLLNFYDKTMEAISRGVPLEEIAKLPVREEIGRMKFEPDVGKIKALIDKTNEQFEELFKKYGA.

Positions 396–529 (FLGYLIADGT…FSYLLAKLGI (134 aa)) constitute a DOD-type homing endonuclease domain.

This sequence belongs to the ATPase alpha/beta chains family. In terms of assembly, has multiple subunits with at least A(3), B(3), C, D, E, F, H, I and proteolipid K(x). This protein undergoes a protein self splicing that involves a post-translational excision of the VDE intervening region (intein) followed by peptide ligation.

It is found in the cell membrane. It carries out the reaction ATP + H2O + 4 H(+)(in) = ADP + phosphate + 5 H(+)(out). Component of the A-type ATP synthase that produces ATP from ADP in the presence of a proton gradient across the membrane. The A chain is the catalytic subunit. The chain is A-type ATP synthase subunit A from Pyrococcus abyssi (strain GE5 / Orsay).